A 338-amino-acid chain; its full sequence is Fructose-1,6-bisphosphatase class 1 (338 aa).

Residues Glu91, Asp113, Leu115, and Asp116 each coordinate Mg(2+). Substrate-binding positions include 116–119 (DGSS), Asn208, and Lys274. Glu280 provides a ligand contact to Mg(2+).

Belongs to the FBPase class 1 family. As to quaternary structure, homotetramer. Requires Mg(2+) as cofactor.

The protein localises to the cytoplasm. The enzyme catalyses beta-D-fructose 1,6-bisphosphate + H2O = beta-D-fructose 6-phosphate + phosphate. It participates in carbohydrate biosynthesis; gluconeogenesis. The sequence is that of Fructose-1,6-bisphosphatase class 1 from Ralstonia pickettii (strain 12J).